We begin with the raw amino-acid sequence, 494 residues long: Transcriptional regulator of yeast form adherence 3 (494 aa).

In terms of domain architecture, SPX spans 1–360 (MKFAKTLERT…SLGIQKTFPK (360 aa)). The RING-type zinc-finger motif lies at 398–437 (CPICMNIAYKPIRLSCGHLFCVRCLVKMKQDDKTSCPLCR).

The protein resides in the nucleus. Functionally, transcription factor required for yeast cell adherence to silicone substrate. This Candida albicans (strain SC5314 / ATCC MYA-2876) (Yeast) protein is Transcriptional regulator of yeast form adherence 3 (TRY3).